The sequence spans 275 residues: Shikimate dehydrogenase (NADP(+)) (275 aa).

Shikimate is bound by residues 19-21 (SIS) and T66. Residue K70 is the Proton acceptor of the active site. Residues N91 and D106 each coordinate shikimate. NADP(+) is bound by residues 129 to 133 (GAGGA), 153 to 158 (NRTYGR), and I219. Y221 lines the shikimate pocket. G242 serves as a coordination point for NADP(+).

The protein belongs to the shikimate dehydrogenase family. In terms of assembly, homodimer.

The catalysed reaction is shikimate + NADP(+) = 3-dehydroshikimate + NADPH + H(+). Its pathway is metabolic intermediate biosynthesis; chorismate biosynthesis; chorismate from D-erythrose 4-phosphate and phosphoenolpyruvate: step 4/7. Functionally, involved in the biosynthesis of the chorismate, which leads to the biosynthesis of aromatic amino acids. Catalyzes the reversible NADPH linked reduction of 3-dehydroshikimate (DHSA) to yield shikimate (SA). The protein is Shikimate dehydrogenase (NADP(+)) of Dictyoglomus thermophilum (strain ATCC 35947 / DSM 3960 / H-6-12).